The following is a 66-amino-acid chain: Large ribosomal subunit protein eL24 (66 aa).

Residues Cys-7, Cys-10, Cys-33, and Cys-37 each coordinate Zn(2+). The C4-type zinc finger occupies 7–37 (CSYCGKPFEPGTGKMYVRNDGRVLFFCSRKC).

It belongs to the eukaryotic ribosomal protein eL24 family. Part of the 50S ribosomal subunit. Forms a cluster with proteins L3 and L14. Requires Zn(2+) as cofactor.

Functionally, binds to the 23S rRNA. The polypeptide is Large ribosomal subunit protein eL24 (Pyrococcus furiosus (strain ATCC 43587 / DSM 3638 / JCM 8422 / Vc1)).